The chain runs to 61 residues: MAKKSMINKANAPQKFTVRGHNRCKLCGRPHGYMRKFGICRICFRELAYRGEIPGVKKASW.

Residues C24, C27, C40, and C43 each coordinate Zn(2+).

It belongs to the universal ribosomal protein uS14 family. Zinc-binding uS14 subfamily. In terms of assembly, part of the 30S ribosomal subunit. Contacts proteins S3 and S10. Zn(2+) is required as a cofactor.

Binds 16S rRNA, required for the assembly of 30S particles and may also be responsible for determining the conformation of the 16S rRNA at the A site. In Desulforamulus reducens (strain ATCC BAA-1160 / DSM 100696 / MI-1) (Desulfotomaculum reducens), this protein is Small ribosomal subunit protein uS14.